Here is a 688-residue protein sequence, read N- to C-terminus: Elongation factor G (688 aa).

In terms of domain architecture, tr-type G spans 8-282 (INFRNFGIMA…AVVDFLPSPV (275 aa)). Residues 17-24 (AHIDAGKT), 81-85 (DTPGH), and 135-138 (NKMD) each bind GTP.

It belongs to the TRAFAC class translation factor GTPase superfamily. Classic translation factor GTPase family. EF-G/EF-2 subfamily.

The protein localises to the cytoplasm. Functionally, catalyzes the GTP-dependent ribosomal translocation step during translation elongation. During this step, the ribosome changes from the pre-translocational (PRE) to the post-translocational (POST) state as the newly formed A-site-bound peptidyl-tRNA and P-site-bound deacylated tRNA move to the P and E sites, respectively. Catalyzes the coordinated movement of the two tRNA molecules, the mRNA and conformational changes in the ribosome. The sequence is that of Elongation factor G (fusA) from Mycoplasma pneumoniae (strain ATCC 29342 / M129 / Subtype 1) (Mycoplasmoides pneumoniae).